The primary structure comprises 120 residues: Large ribosomal subunit protein bL19 (120 aa).

It belongs to the bacterial ribosomal protein bL19 family.

Its function is as follows. This protein is located at the 30S-50S ribosomal subunit interface and may play a role in the structure and function of the aminoacyl-tRNA binding site. The sequence is that of Large ribosomal subunit protein bL19 from Chlorobium luteolum (strain DSM 273 / BCRC 81028 / 2530) (Pelodictyon luteolum).